The primary structure comprises 434 residues: Eukaryotic peptide chain release factor subunit 1-2 (434 aa).

Position 2 is an N-acetylalanine (Ala-2).

The protein belongs to the eukaryotic release factor 1 family. In terms of assembly, heterodimer of two subunits, one of which binds GTP.

The protein resides in the cytoplasm. Directs the termination of nascent peptide synthesis (translation) in response to the termination codons UAA, UAG and UGA. Modulates plant growth and development. This is Eukaryotic peptide chain release factor subunit 1-2 from Arabidopsis thaliana (Mouse-ear cress).